Consider the following 198-residue polypeptide: Glycerol-3-phosphate acyltransferase 3 (198 aa).

4 helical membrane passes run T4 to G24, L71 to G91, L113 to F133, and V147 to L167.

It belongs to the PlsY family. As to quaternary structure, probably interacts with PlsX.

The protein resides in the cell membrane. It carries out the reaction an acyl phosphate + sn-glycerol 3-phosphate = a 1-acyl-sn-glycero-3-phosphate + phosphate. The protein operates within lipid metabolism; phospholipid metabolism. Its function is as follows. Catalyzes the transfer of an acyl group from acyl-phosphate (acyl-PO(4)) to glycerol-3-phosphate (G3P) to form lysophosphatidic acid (LPA). This enzyme utilizes acyl-phosphate as fatty acyl donor, but not acyl-CoA or acyl-ACP. In Bacillus anthracis, this protein is Glycerol-3-phosphate acyltransferase 3.